Reading from the N-terminus, the 205-residue chain is Melanocortin-2 receptor accessory protein 2 (205 aa).

Asn9 is a glycosylation site (N-linked (GlcNAc...) asparagine). The helical transmembrane segment at 45–65 threads the bilayer; that stretch reads IVIGFWVGLAVFVIFMFFVLT. Ser89 is subject to Phosphoserine.

This sequence belongs to the MRAP family. In terms of assembly, homodimer and heterodimer. Forms antiparallel homodimers and heterodimers with MRAP. Interacts with MC1R, MC2R, MC3R, MC4R and MC5R. Expressed in the adrenal gland and brain. Not expressed in other tissues.

Its subcellular location is the cell membrane. The protein localises to the endoplasmic reticulum membrane. Modulator of melanocortin receptor 4 (MC4R), a receptor involved in energy homeostasis. Plays a central role in the control of energy homeostasis and body weight regulation by increasing ligand-sensitivity of MC4R and MC4R-mediated generation of cAMP. May also act as a negative regulator of MC2R: competes with MRAP for binding to MC2R and impairs the binding of corticotropin (ACTH) to MC2R. May also regulate activity of other melanocortin receptors (MC1R, MC3R and MC5R); however, additional evidence is required in vivo. The chain is Melanocortin-2 receptor accessory protein 2 (MRAP2) from Homo sapiens (Human).